Reading from the N-terminus, the 860-residue chain is Leucine--tRNA ligase (860 aa).

The 'HIGH' region signature appears at 42 to 52 (PYPSGRLHMGH). The short motif at 619–623 (KMSKS) is the 'KMSKS' region element. Residue lysine 622 participates in ATP binding.

The protein belongs to the class-I aminoacyl-tRNA synthetase family.

The protein localises to the cytoplasm. The catalysed reaction is tRNA(Leu) + L-leucine + ATP = L-leucyl-tRNA(Leu) + AMP + diphosphate. The polypeptide is Leucine--tRNA ligase (Escherichia coli O17:K52:H18 (strain UMN026 / ExPEC)).